Reading from the N-terminus, the 170-residue chain is Shikimate kinase (170 aa).

Residue 11 to 16 (LSGKST) coordinates ATP. Ser15 contacts Mg(2+). Substrate contacts are provided by Asp33, Arg57, and Gly79. Arg119 is a binding site for ATP. Residue Arg137 participates in substrate binding.

It belongs to the shikimate kinase family. Monomer. It depends on Mg(2+) as a cofactor.

Its subcellular location is the cytoplasm. It carries out the reaction shikimate + ATP = 3-phosphoshikimate + ADP + H(+). Its pathway is metabolic intermediate biosynthesis; chorismate biosynthesis; chorismate from D-erythrose 4-phosphate and phosphoenolpyruvate: step 5/7. Its function is as follows. Catalyzes the specific phosphorylation of the 3-hydroxyl group of shikimic acid using ATP as a cosubstrate. This chain is Shikimate kinase, found in Clostridium botulinum (strain ATCC 19397 / Type A).